The sequence spans 370 residues: UDP-N-acetylglucosamine--N-acetylmuramyl-(pentapeptide) pyrophosphoryl-undecaprenol N-acetylglucosamine transferase (370 aa).

Residues 10–12 (TGG), Asn124, Arg166, Ser198, Ile252, and Gln297 each bind UDP-N-acetyl-alpha-D-glucosamine.

This sequence belongs to the glycosyltransferase 28 family. MurG subfamily.

It localises to the cell membrane. It carries out the reaction di-trans,octa-cis-undecaprenyl diphospho-N-acetyl-alpha-D-muramoyl-L-alanyl-D-glutamyl-meso-2,6-diaminopimeloyl-D-alanyl-D-alanine + UDP-N-acetyl-alpha-D-glucosamine = di-trans,octa-cis-undecaprenyl diphospho-[N-acetyl-alpha-D-glucosaminyl-(1-&gt;4)]-N-acetyl-alpha-D-muramoyl-L-alanyl-D-glutamyl-meso-2,6-diaminopimeloyl-D-alanyl-D-alanine + UDP + H(+). The protein operates within cell wall biogenesis; peptidoglycan biosynthesis. Its function is as follows. Cell wall formation. Catalyzes the transfer of a GlcNAc subunit on undecaprenyl-pyrophosphoryl-MurNAc-pentapeptide (lipid intermediate I) to form undecaprenyl-pyrophosphoryl-MurNAc-(pentapeptide)GlcNAc (lipid intermediate II). The sequence is that of UDP-N-acetylglucosamine--N-acetylmuramyl-(pentapeptide) pyrophosphoryl-undecaprenol N-acetylglucosamine transferase from Finegoldia magna (strain ATCC 29328 / DSM 20472 / WAL 2508) (Peptostreptococcus magnus).